The primary structure comprises 413 residues: Heparan-sulfate 6-O-sulfotransferase 1-A (413 aa).

Residues 9–15 (MVERSSK) lie on the Cytoplasmic side of the membrane. A helical; Signal-anchor for type II membrane protein membrane pass occupies residues 16–36 (FLFIVVGSVLFMLILYQYVAP). At 37–413 (GMMNFGSPHG…DYMNHIINRW (377 aa)) the chain is on the lumenal side. 92–100 (HIQKTGGTT) provides a ligand contact to 3'-phosphoadenylyl sulfate. Residues 122-123 (KK), Arg-139, Trp-144, and His-149 contribute to the substrate site. Catalysis depends on His-149, which acts as the Proton acceptor. Arg-183 and Ser-191 together coordinate 3'-phosphoadenylyl sulfate. Residues His-195 and Trp-202 each coordinate substrate. N-linked (GlcNAc...) asparagine glycosylation is present at Asn-262. 3'-phosphoadenylyl sulfate is bound at residue 315-317 (MQY). N-linked (GlcNAc...) asparagine glycosylation occurs at Asn-318. 321-322 (RA) is a 3'-phosphoadenylyl sulfate binding site. An N-linked (GlcNAc...) asparagine glycan is attached at Asn-329. The disordered stretch occupies residues 374-401 (PLFPFRRTSSSDSTFRDDAPESEGSRLP).

Belongs to the sulfotransferase 6 family. During somitogenesis, first expressed in polster and presumptive forebrain. During mid-somitogenesis, expressed in eye, hindbrain and anterior spinal cord. During late somitogenesis, strong expression in eye and hindbrain, decreased levels in midbrain and anterior spinal cord. At 24 hours post-fertilization (hpf), expressed in neural retina and lens, brain and anterior spinal cord. At 36 hpf, retinal expression is confined to the ciliary marginal zone and there is strong expression in tectum, rhombomeres and otic vesicle. At 48 hpf, expressed in retinal ganglion cells and in tectum, rhombomeres and pectoral fin. Not detected in the vasculature during embryogenesis.

Its subcellular location is the membrane. The enzyme catalyses alpha-D-glucosaminyl-[heparan sulfate](n) + 3'-phosphoadenylyl sulfate = 6-sulfo-alpha-D-glucosaminyl-[heparan sulfate](n) + adenosine 3',5'-bisphosphate + H(+). Functionally, 6-O-sulfation enzyme which catalyzes the transfer of sulfate from 3'-phosphoadenosine 5'-phosphosulfate (PAPS) to position 6 of the N-sulfoglucosamine residue (GlcNS) of heparan sulfate. The sequence is that of Heparan-sulfate 6-O-sulfotransferase 1-A from Danio rerio (Zebrafish).